The sequence spans 332 residues: L-lactate dehydrogenase A chain (332 aa).

Residues 29–57 (GAVGMACAISILMKDLADELALVDVMEDK) and Arg-99 contribute to the NAD(+) site. The substrate site is built by Arg-106, Asn-138, and Arg-169. Asn-138 is a binding site for NAD(+). The active-site Proton acceptor is His-193. Thr-248 is a substrate binding site.

The protein belongs to the LDH/MDH superfamily. LDH family. As to quaternary structure, homotetramer.

The protein localises to the cytoplasm. The enzyme catalyses (S)-lactate + NAD(+) = pyruvate + NADH + H(+). Its pathway is fermentation; pyruvate fermentation to lactate; (S)-lactate from pyruvate: step 1/1. Its function is as follows. Interconverts simultaneously and stereospecifically pyruvate and lactate with concomitant interconversion of NADH and NAD(+). This Sceloporus undulatus (Eastern fence lizard) protein is L-lactate dehydrogenase A chain (LDHA).